A 721-amino-acid polypeptide reads, in one-letter code: MGTPASGRKRTPVKDRFSAEDEALSNIAREAEARLAAKRAARAEARDIRMRELERQQKEYSLHSFDRKWGQIQKWLEDSERARYSHRSSHHRPYLGVEDALSIRSVGSHRYDMFKDRSSRLSSLNHSYSHSHGMKKRSSDSHKDLLSGLYFDQRNYSSLRHSKPTSAYYTRQSSSLYSDPLATYKSDRASPTANSGLLRSASLASLYNGGLYNPYGPRTPSECSYYSSRISSARSSPGFTNDDTASIVSSDRASRGRRESVVSAADYFSRSNRRGSVVSEVDDISIPDLSSLDEKSDKQYAENYTRPSSRNSASATTPLSGNSSRRGSGDTSSLIDPDTSLSELRDIYDLKDQIQDVEGRYMQGLKELKESLSEVEEKYKKAMVSNAQLDNEKNNLIYQVDTLKDVIEEQEEQMAEFYRENEEKSKELERQKHMCSVLQHKMEELKEGLRQRDELIEEKQRMQQKIDTMTKEVFDLQETLLWKDKKIGALEKQKEYIACLRNERDMLREELADLQETVKTGEKHGLVIIPDGTPNGDVSHEPVAGAITVVSQEAAQVLESAGEGPLDVRLRKLAGEKEELLSQIRKLKLQLEEERQKCSRNDGTVGDLAGLQNGSDLQFIEMQRDANRQISEYKFKLSKAEQDITTLEQSISRLEGQVLRYKTAAENAEKVEDELKAEKRKLQRELRTALDKIEEMEMTNSHLAKRLEKMKANRTALLAQQ.

Positions 1-370 (MGTPASGRKR…YMQGLKELKE (370 aa)) are DVL3-binding. Phosphoserine is present on serine 18. Residues 22 to 49 (EALSNIAREAEARLAAKRAARAEARDIR) are a coiled coil. Residues glycine 96, leucine 101, tyrosine 168, serine 173, serine 190, and serine 202 each carry the phosphoserine modification. 2 disordered regions span residues 232–262 (SARSSPGFTNDDTASIVSSDRASRGRRESVV) and 295–338 (KSDK…IDPD). Polar residues-rich tracts occupy residues 237-251 (PGFTNDDTASIVSSD) and 305-338 (TRPSSRNSASATTPLSGNSSRRGSGDTSSLIDPD). A phosphoserine mark is found at serine 309, serine 312, serine 320, serine 324, and serine 328. The residue at position 331 (threonine 331) is a Phosphothreonine. Phosphoserine is present on residues serine 332 and serine 333. 2 coiled-coil regions span residues 349 to 524 (DLKD…GEKH) and 566 to 714 (LDVR…KANR).

Belongs to the LRRFIP family. As to quaternary structure, interacts (via N-terminus) with DVL3. Interacts with FLII. Weakly interacts with MYD88 in resting cells. Following LPS-stimulation, the interaction with MYD88 is rapidly enhanced; the complex gradually dissociates to basal levels after 6 hours of stimulation. Interaction with MYD88 is regulated by LPS-induced phosphorylation at Ser-202. In the presence of LPS, competes with FLII for MYD88-binding. In terms of processing, ser-190 and Ser-202 are phosphorylated in response to LPS stimulation. Ser-202 phosphorylation regulates the LPS-induced interaction with MYD88. As to expression, widely expressed, with highest levels in heart and skeletal muscle.

Its function is as follows. May function as activator of the canonical Wnt signaling pathway, in association with DVL3, upstream of CTNNB1/beta-catenin. Positively regulates Toll-like receptor (TLR) signaling in response to agonist probably by competing with the negative FLII regulator for MYD88-binding. The polypeptide is Leucine-rich repeat flightless-interacting protein 2 (LRRFIP2) (Homo sapiens (Human)).